A 210-amino-acid polypeptide reads, in one-letter code: Inner membrane-spanning protein YciB (210 aa).

The next 6 helical transmembrane spans lie at 12–32 (EVSP…FFFA), 53–73 (IFIA…ASWI), 78–98 (LPMM…LTLW), 115–135 (LFGA…GYVF), 148–168 (KLTI…EVIW), and 175–195 (FWVA…TLAQ).

This sequence belongs to the YciB family.

Its subcellular location is the cell inner membrane. In terms of biological role, plays a role in cell envelope biogenesis, maintenance of cell envelope integrity and membrane homeostasis. In Rhizobium meliloti (strain 1021) (Ensifer meliloti), this protein is Inner membrane-spanning protein YciB.